We begin with the raw amino-acid sequence, 99 residues long: Plastocyanin (99 aa).

Positions 1–99 constitute a Plastocyanin-like domain; the sequence is IEIKLGGDDG…AGMVGKVTVQ (99 aa). Residues His-37, Cys-84, His-87, and Met-92 each contribute to the Cu cation site.

It belongs to the plastocyanin family. It depends on Cu(2+) as a cofactor.

The protein localises to the plastid. Its subcellular location is the chloroplast thylakoid membrane. In terms of biological role, participates in electron transfer between P700 and the cytochrome b6-f complex in photosystem I. This Rumex obtusifolius (Bitter dock) protein is Plastocyanin (PETE).